Consider the following 571-residue polypeptide: MRTSQYLFSTLKETPNDAQVVSHQLMLRAGMIRPMASGLYNWLPTGIKVLKKVENIIREEMNKGGAIEVLMPVVQPAELWQESGRWNDYGAELLRFVDRGSRDFVLGPTHEEVITDLVRREVSSYKQLPLNLYQTQTKFRDEVRPRFGVMRSREFVMKDAYSFHVDKASLQETYDVMYQVYSNIFTRLGLDFRAVQADTGSIGGSASHEFQVLASSGEDDVVFSTESDFAANIELAEAVAVGERQAPTAEMQLVDTPNAKTINELVEQFNLPIEKTVKTLIVKGATEEQSLVALVLRGDHELNEIKAQKHPLVADPLEFADEAEIKAKIGAGVGSLGVINLNVPAIIDRSVAVMSDFGCGANIDGKHYFNVNWERDVAMPEVADLRNVVEGDPSPDGKGVLQIKRGIEVGHIFQLGTKYSEAMKATVQGEDGKPLVMTMGCYGIGVTRVVAAAIEQHHDERGIIWPSDEIAPFTVAIVPMNMHKSESVQQFSEELYRTLKAQGVDVIFDDRKERPGVMFADMELIGVPHMVVIGEKNLANGEIEYKNRRTGEKQMIAKDQLLAFLKENVKA.

The protein belongs to the class-II aminoacyl-tRNA synthetase family. ProS type 1 subfamily. As to quaternary structure, homodimer.

The protein localises to the cytoplasm. The enzyme catalyses tRNA(Pro) + L-proline + ATP = L-prolyl-tRNA(Pro) + AMP + diphosphate. Functionally, catalyzes the attachment of proline to tRNA(Pro) in a two-step reaction: proline is first activated by ATP to form Pro-AMP and then transferred to the acceptor end of tRNA(Pro). As ProRS can inadvertently accommodate and process non-cognate amino acids such as alanine and cysteine, to avoid such errors it has two additional distinct editing activities against alanine. One activity is designated as 'pretransfer' editing and involves the tRNA(Pro)-independent hydrolysis of activated Ala-AMP. The other activity is designated 'posttransfer' editing and involves deacylation of mischarged Ala-tRNA(Pro). The misacylated Cys-tRNA(Pro) is not edited by ProRS. The sequence is that of Proline--tRNA ligase from Actinobacillus pleuropneumoniae serotype 3 (strain JL03).